The sequence spans 276 residues: Adenylate kinase (276 aa).

Residue 50–55 (GAGKGT) participates in ATP binding. The segment at 70–99 (ATGDMLRSQVAKKTPLGREAKKIMDQGGLV) is NMP. Residues threonine 71, arginine 76, 97 to 99 (GLV), 126 to 129 (GFPR), and glutamine 133 each bind AMP. The tract at residues 167–204 (GRLVHPASGRSYHTTFNPPKKAMTDDVTGEPLIQRSDD) is LID. Residues arginine 168 and 177-178 (SY) each bind ATP. Residues arginine 201 and arginine 212 each contribute to the AMP site. Glutamine 240 is an ATP binding site.

Belongs to the adenylate kinase family. AK2 subfamily. As to quaternary structure, monomer.

It localises to the cytoplasm. The protein resides in the cytosol. Its subcellular location is the mitochondrion intermembrane space. The enzyme catalyses AMP + ATP = 2 ADP. Functionally, catalyzes the reversible transfer of the terminal phosphate group between ATP and AMP. Plays an important role in cellular energy homeostasis and in adenine nucleotide metabolism. Adenylate kinase activity is critical for regulation of the phosphate utilization and the AMP de novo biosynthesis pathways. The chain is Adenylate kinase from Pyricularia oryzae (strain 70-15 / ATCC MYA-4617 / FGSC 8958) (Rice blast fungus).